The following is a 230-amino-acid chain: PKHD-type hydroxylase PD_1553 (230 aa).

Residues 78–182 (RTLPPRFNRY…RIASFFWVQS (105 aa)) form the Fe2OG dioxygenase domain. Residues His96, Asp98, and His163 each contribute to the Fe cation site. Arg173 lines the 2-oxoglutarate pocket.

Requires Fe(2+) as cofactor. L-ascorbate is required as a cofactor.

The sequence is that of PKHD-type hydroxylase PD_1553 from Xylella fastidiosa (strain Temecula1 / ATCC 700964).